The following is a 651-amino-acid chain: MESKSILEELLLKKSQQKKKMSPNNYKERLFVLTKTSLSYYEYDKMKRGSRKGSIEIKKIRCVEKVNLEEQTPVERQYPFQIVYKDGLLYVYASNEESRCQWLKALQKEIRGNPHLLIKYHSGFFVDGKFLCCQQSCKAAPGCTLWEAYADLHIAISDEKHRAPTFPERLLKIPRAVPVLKMDASSSGAILPQYDSYSKKSCGSQPTSNIRYIPREDCPDWWQVRKLKSEEDIACSNQLERNIASHSTSKMSWGFPESSSSEEEENLHAYDWFAGNISRSQSEQLLRQKGKEGAFMVRNSSQMGMYTVSLFSKAVNDKKGTVKHYHVHTNAENKLYLAENYCFDSIPKLIHYHQHNSAGMITRLRHPVSTKANKVPVSVALGSGIWELKREEITLLKELGNGQFGVVQLGQWKGQYDVAVKMIKEGAMSEDEFFQEAQTMMKLSHPKLVKFYGVCSKKYPIYIVTEYITNGCLLNYLKSHGKGLESCQLLEMCYDVCEGMAFLESHQFIHRDLAARNCLVDSDLSVKVSDFGMTRYVLDDQYVSSVGTKFPVKWSAPEVFHYFKYSSKSDVWAFGILMWEVFSLGKQPYDLYDNSEVVVKVSQGHRLYRPQLASDTIYQIMYSCWHELPEKRPTFQQLLSAIEPLREQDKP.

The 108-residue stretch at 4–111 folds into the PH domain; that stretch reads KSILEELLLK…WLKALQKEIR (108 aa). Residues 113-149 form a Btk-type zinc finger; it reads NPHLLIKYHSGFFVDGKFLCCQQSCKAAPGCTLWEAY. Positions 121, 132, 133, and 143 each coordinate Zn(2+). Positions 272 to 368 constitute an SH2 domain; that stretch reads WFAGNISRSQ…GMITRLRHPV (97 aa). In terms of domain architecture, Protein kinase spans 393–646; sequence ITLLKELGNG…QLLSAIEPLR (254 aa). ATP-binding positions include 399–407 and K421; that span reads LGNGQFGVV. The Proton acceptor role is filled by D512. The residue at position 542 (Y542) is a Phosphotyrosine; by SRC and autocatalysis.

Belongs to the protein kinase superfamily. Tyr protein kinase family. TEC subfamily. As to quaternary structure, interacts with BCAR1, CAV1, MYD88, PTK2/FAK1, RUFY1, RUFY2, STAT3, TIRAP and TNFRSF1B. Zn(2+) is required as a cofactor. Post-translationally, phosphorylated in response to protein I/II and to LPS. Phosphorylation at Tyr-542 by SRC and by autocatalysis leads to activation and is required for STAT3 phosphorylation by BMX. As to expression, specifically expressed in the endocardium of the developing heart as well as in the endocardium of the left ventricle and in the endothelium of large arteries in adult mice.

The protein localises to the cytoplasm. It carries out the reaction L-tyrosyl-[protein] + ATP = O-phospho-L-tyrosyl-[protein] + ADP + H(+). With respect to regulation, TEK and vascular endothelial growth factor receptor 1 (FLT1) stimulate BMX tyrosine kinase activity. Activated by integrins through the mediation of PTK2/FAK1. Activated by TNF through the mediation of TNFRSF1B. In terms of biological role, non-receptor tyrosine kinase that plays central but diverse modulatory roles in various signaling processes involved in the regulation of actin reorganization, cell migration, cell proliferation and survival, cell adhesion, and apoptosis. Participates in signal transduction stimulated by growth factor receptors, cytokine receptors, G-protein coupled receptors, antigen receptors and integrins. Induces tyrosine phosphorylation of BCAR1 in response to integrin regulation. Activation of BMX by integrins is mediated by PTK2/FAK1, a key mediator of integrin signaling events leading to the regulation of actin cytoskeleton and cell motility. Plays a critical role in TNF-induced angiogenesis, and implicated in the signaling of TEK and FLT1 receptors, 2 important receptor families essential for angiogenesis. Required for the phosphorylation and activation of STAT3, a transcription factor involved in cell differentiation. Also involved in interleukin-6 (IL6) induced differentiation. Also plays a role in programming adaptive cytoprotection against extracellular stress in different cell systems, salivary epithelial cells, brain endothelial cells, and dermal fibroblasts. May be involved in regulation of endocytosis through its interaction with an endosomal protein RUFY1. May also play a role in the growth and differentiation of hematopoietic cells; as well as in signal transduction in endocardial and arterial endothelial cells. This Mus musculus (Mouse) protein is Cytoplasmic tyrosine-protein kinase BMX (Bmx).